A 132-amino-acid chain; its full sequence is MGQSKSKPREKKEEEKSTTTLVTKSKEKVMEKEAKQSDKESQPAESLLFATSKHSRPSSSSEDKPETKQRSSKKRSVIPQIIITRASNETLISYGIPDNDEQRTIREHADWGPYHRHRSPSTIAAYDVHNTE.

Residues 1–60 form an interaction with ATG16L1 region; sequence MGQSKSKPREKKEEEKSTTTLVTKSKEKVMEKEAKQSDKESQPAESLLFATSKHSRPSSS. The disordered stretch occupies residues 1–81; that stretch reads MGQSKSKPRE…SKKRSVIPQI (81 aa). The span at 24–42 shows a compositional bias: basic and acidic residues; that stretch reads KSKEKVMEKEAKQSDKESQ. An interaction with VDAC2 region spans residues 61 to 132; that stretch reads SEDKPETKQR…IAAYDVHNTE (72 aa). The PQIIIT signature appears at 79 to 84; it reads PQIIIT. S87 is subject to Phosphoserine. Residues 110–132 are disordered; it reads DWGPYHRHRSPSTIAAYDVHNTE.

In terms of assembly, interacts (via PQIIIT motif) with PPP3R2 and PPP3CC. Interacts with VDAC2. Interacts with ATG16L1 (via WD repeats). Interacts with PPP3R1, PPP3CA and PPP3CB. Predominantly expressed in the testis (at protein level). Expressed in the sperm midpiece (at protein level).

The protein resides in the cytoplasm. It is found in the cytosol. Its subcellular location is the nucleus. The protein localises to the mitochondrion. Plays an important role in sperm motility and male fertility. Required for sperm midpiece flexibility and for the localization of sperm calcineurin to the mitochondria. Promotes mitophagy as well as acts as an autophagy mediator in male germline cells. Links damaged mitochondria to autophagosomes via its binding to the outer mitochondrial membrane protein VDAC2, as well as to key autophagy machinery component ATG16L1. The chain is Spermatogenesis-associated protein 33 (Spata33) from Mus musculus (Mouse).